A 271-amino-acid polypeptide reads, in one-letter code: Putative hydro-lyase Mrad2831_3350 (271 aa).

Belongs to the D-glutamate cyclase family.

This is Putative hydro-lyase Mrad2831_3350 from Methylobacterium radiotolerans (strain ATCC 27329 / DSM 1819 / JCM 2831 / NBRC 15690 / NCIMB 10815 / 0-1).